The primary structure comprises 617 residues: Solute carrier family 2, facilitated glucose transporter member 12 (617 aa).

The segment at 1–29 (MVPVENTEGPSLLNQKGTAVETEGSGSRH) is disordered. Over 1-44 (MVPVENTEGPSLLNQKGTAVETEGSGSRHPPWARGCGMFTFLSS) the chain is Cytoplasmic. Residues 8–17 (EGPSLLNQKG) show a composition bias toward polar residues. Residues 45–65 (VTAAVSGLLVGYELGIISGAL) traverse the membrane as a helical segment. Over 66-80 (LQIKTLLALSCHEQE) the chain is Extracellular. Residues 81–101 (MVVSSLVIGALLASLTGGVLI) form a helical membrane-spanning segment. The Cytoplasmic segment spans residues 102–115 (DRYGRRTAIILSSC). Residues 116 to 136 (LLGLGSLVLILSLSYTVLIVG) form a helical membrane-spanning segment. Position 137 (Arg137) is a topological domain, extracellular. The chain crosses the membrane as a helical span at residues 138–158 (IAIGVSISLSSIATCVYIAEI). Topologically, residues 159–172 (APQHRRGLLVSLNE) are cytoplasmic. A helical transmembrane segment spans residues 173 to 193 (LMIVIGILSAYISNYAFANVF). The Extracellular portion of the chain corresponds to 194-197 (HGWK). Residues 198–218 (YMFGLVIPLGVLQAIAMYFLP) form a helical membrane-spanning segment. Topologically, residues 219–278 (PSPRFLVMKGQEGAASKVLGRLRALSDTTEELTVIKSSLKDEYQYSFWDLFRSKDNMRTR) are cytoplasmic. The helical transmembrane segment at 279-299 (IMIGLTLVFFVQITGQPNILF) threads the bilayer. The Extracellular portion of the chain corresponds to 300–317 (YASTVLKSVGFQSNEAAS). Residues 318–338 (LASTGVGVVKVISTIPATLLV) traverse the membrane as a helical segment. At 339 to 345 (DHVGSKT) the chain is on the cytoplasmic side. The helical transmembrane segment at 346 to 366 (FLCIGSSVMAASLVTMGIVNL) threads the bilayer. At 367 to 466 (NIHMNFTHIC…PAFLKWLSLA (100 aa)) the chain is on the extracellular side. Asn371, Asn383, Asn396, and Asn401 each carry an N-linked (GlcNAc...) asparagine glycan. A helical membrane pass occupies residues 467 to 487 (SLLVYVAAFSIGLGPMPWLVL). The Cytoplasmic segment spans residues 488–498 (SEIFPGGIRGR). The helical transmembrane segment at 499–519 (AMALTSSMNWGINLLISLTFL) threads the bilayer. Residues 520 to 528 (TVTDLIGLP) are Extracellular-facing. The chain crosses the membrane as a helical span at residues 529–549 (WVCFIYTIMSLASLLFVVMFI). The Cytoplasmic portion of the chain corresponds to 550–617 (PETKGCSLEQ…GQSRQLSPET (68 aa)).

It belongs to the major facilitator superfamily. Sugar transporter (TC 2.A.1.1) family. Glucose transporter subfamily. As to expression, predominantly expressed in skeletal muscle, heart and prostate, with lower levels in brain, placenta and kidney.

It is found in the cell membrane. Its subcellular location is the endomembrane system. The protein resides in the cytoplasm. It localises to the perinuclear region. The catalysed reaction is D-glucose(out) = D-glucose(in). Its function is as follows. Insulin-independent facilitative glucose transporter. This chain is Solute carrier family 2, facilitated glucose transporter member 12, found in Homo sapiens (Human).